The sequence spans 44 residues: Protein PsbN (44 aa).

A helical membrane pass occupies residues 6–26 (FFFTIFLWCLLLSITGYSIYV).

It belongs to the PsbN family.

The protein resides in the plastid. Its subcellular location is the chloroplast thylakoid membrane. Its function is as follows. May play a role in photosystem I and II biogenesis. The polypeptide is Protein PsbN (Chlorella vulgaris (Green alga)).